We begin with the raw amino-acid sequence, 233 residues long: Tumor necrosis factor (233 aa).

Residues 1–35 (MSTESMIRDVELAEEALPKKTGGPQGSRRCLFLSL) are Cytoplasmic-facing. Ser2 is subject to Phosphoserine; by CK1. 2 N6-myristoyl lysine lipidation sites follow: Lys19 and Lys20. Residues 36-56 (FSFLLVAGATTLFCLLHFGVI) form a helical; Signal-anchor for type II membrane protein membrane-spanning segment. At 57–233 (GPQREEFPKD…GQVYFGIIAL (177 aa)) the chain is on the extracellular side. Ser80 is a glycosylation site (O-linked (GalNAc...) serine; in soluble form). In terms of domain architecture, THD spans 88 to 233 (PVAHVVANPQ…GQVYFGIIAL (146 aa)). The cysteines at positions 145 and 177 are disulfide-linked.

The protein belongs to the tumor necrosis factor family. As to quaternary structure, homotrimer. Interacts with SPPL2B. The soluble form derives from the membrane form by proteolytic processing. The membrane-bound form is further proteolytically processed by SPPL2A or SPPL2B through regulated intramembrane proteolysis producing TNF intracellular domains (ICD1 and ICD2) released in the cytosol and TNF C-domain 1 and C-domain 2 secreted into the extracellular space. In terms of processing, the membrane form, but not the soluble form, is phosphorylated on serine residues. Dephosphorylation of the membrane form occurs by binding to soluble TNFRSF1A/TNFR1. Post-translationally, O-glycosylated; glycans contain galactose, N-acetylgalactosamine and N-acetylneuraminic acid. The soluble form is demyristoylated by SIRT6, promoting its secretion.

It localises to the cell membrane. The protein resides in the membrane. The protein localises to the secreted. Functionally, cytokine that binds to TNFRSF1A/TNFR1 and TNFRSF1B/TNFBR. It is mainly secreted by macrophages and can induce cell death of certain tumor cell lines. It is potent pyrogen causing fever by direct action or by stimulation of interleukin-1 secretion and is implicated in the induction of cachexia, Under certain conditions it can stimulate cell proliferation and induce cell differentiation. Induces insulin resistance in adipocytes via inhibition of insulin-induced IRS1 tyrosine phosphorylation and insulin-induced glucose uptake. Induces GKAP42 protein degradation in adipocytes which is partially responsible for TNF-induced insulin resistance. Plays a role in angiogenesis by inducing VEGF production synergistically with IL1B and IL6. Promotes osteoclastogenesis and therefore mediates bone resorption. In terms of biological role, the TNF intracellular domain (ICD) form induces IL12 production in dendritic cells. This is Tumor necrosis factor (TNF) from Papio sp. (Baboon).